Reading from the N-terminus, the 157-residue chain is Protein Smg homolog (157 aa).

The protein belongs to the Smg family.

The chain is Protein Smg homolog from Shewanella woodyi (strain ATCC 51908 / MS32).